The following is a 184-amino-acid chain: Elongation factor P (184 aa).

This sequence belongs to the elongation factor P family.

The protein resides in the cytoplasm. Its pathway is protein biosynthesis; polypeptide chain elongation. Involved in peptide bond synthesis. Stimulates efficient translation and peptide-bond synthesis on native or reconstituted 70S ribosomes in vitro. Probably functions indirectly by altering the affinity of the ribosome for aminoacyl-tRNA, thus increasing their reactivity as acceptors for peptidyl transferase. The protein is Elongation factor P of Leptothrix cholodnii (strain ATCC 51168 / LMG 8142 / SP-6) (Leptothrix discophora (strain SP-6)).